The chain runs to 251 residues: Aspartate/glutamate leucyltransferase (251 aa).

This sequence belongs to the R-transferase family. Bpt subfamily.

Its subcellular location is the cytoplasm. It catalyses the reaction N-terminal L-glutamyl-[protein] + L-leucyl-tRNA(Leu) = N-terminal L-leucyl-L-glutamyl-[protein] + tRNA(Leu) + H(+). It carries out the reaction N-terminal L-aspartyl-[protein] + L-leucyl-tRNA(Leu) = N-terminal L-leucyl-L-aspartyl-[protein] + tRNA(Leu) + H(+). Functions in the N-end rule pathway of protein degradation where it conjugates Leu from its aminoacyl-tRNA to the N-termini of proteins containing an N-terminal aspartate or glutamate. The protein is Aspartate/glutamate leucyltransferase of Stenotrophomonas maltophilia (strain K279a).